The sequence spans 173 residues: ATP synthase subunit b (173 aa).

A helical transmembrane segment spans residues 12–32 (LDVNPGLVVWTLITFLVVVLV).

Belongs to the ATPase B chain family. As to quaternary structure, F-type ATPases have 2 components, F(1) - the catalytic core - and F(0) - the membrane proton channel. F(1) has five subunits: alpha(3), beta(3), gamma(1), delta(1), epsilon(1). F(0) has three main subunits: a(1), b(2) and c(10-14). The alpha and beta chains form an alternating ring which encloses part of the gamma chain. F(1) is attached to F(0) by a central stalk formed by the gamma and epsilon chains, while a peripheral stalk is formed by the delta and b chains.

Its subcellular location is the cell inner membrane. F(1)F(0) ATP synthase produces ATP from ADP in the presence of a proton or sodium gradient. F-type ATPases consist of two structural domains, F(1) containing the extramembraneous catalytic core and F(0) containing the membrane proton channel, linked together by a central stalk and a peripheral stalk. During catalysis, ATP synthesis in the catalytic domain of F(1) is coupled via a rotary mechanism of the central stalk subunits to proton translocation. Functionally, component of the F(0) channel, it forms part of the peripheral stalk, linking F(1) to F(0). In Leptospira borgpetersenii serovar Hardjo-bovis (strain JB197), this protein is ATP synthase subunit b.